We begin with the raw amino-acid sequence, 198 residues long: Glycerol-3-phosphate acyltransferase 2 (198 aa).

4 consecutive transmembrane segments (helical) span residues 4–24 (TYLL…LVVG), 71–91 (LPMV…AVLG), 113–133 (LLCY…TLLF), and 147–167 (VVAV…AMCL).

This sequence belongs to the PlsY family. In terms of assembly, probably interacts with PlsX.

The protein localises to the cell membrane. It catalyses the reaction an acyl phosphate + sn-glycerol 3-phosphate = a 1-acyl-sn-glycero-3-phosphate + phosphate. It functions in the pathway lipid metabolism; phospholipid metabolism. In terms of biological role, catalyzes the transfer of an acyl group from acyl-phosphate (acyl-PO(4)) to glycerol-3-phosphate (G3P) to form lysophosphatidic acid (LPA). This enzyme utilizes acyl-phosphate as fatty acyl donor, but not acyl-CoA or acyl-ACP. This chain is Glycerol-3-phosphate acyltransferase 2, found in Bacillus cereus (strain ZK / E33L).